The chain runs to 325 residues: ATP synthase gamma chain (325 aa).

Belongs to the ATPase gamma chain family. F-type ATPases have 2 components, CF(1) - the catalytic core - and CF(0) - the membrane proton channel. CF(1) has five subunits: alpha(3), beta(3), gamma(1), delta(1), epsilon(1). CF(0) has three main subunits: a, b and c.

It localises to the cell membrane. Functionally, produces ATP from ADP in the presence of a proton gradient across the membrane. The gamma chain is believed to be important in regulating ATPase activity and the flow of protons through the CF(0) complex. The polypeptide is ATP synthase gamma chain (Corynebacterium diphtheriae (strain ATCC 700971 / NCTC 13129 / Biotype gravis)).